Consider the following 274-residue polypeptide: Shikimate dehydrogenase (NADP(+)) (274 aa).

Shikimate is bound by residues 20 to 22 (SKS) and threonine 68. The Proton acceptor role is filled by lysine 72. Aspartate 84 serves as a coordination point for NADP(+). Shikimate is bound by residues asparagine 93 and aspartate 109. Residues 131-135 (GAGGA) and leucine 217 contribute to the NADP(+) site. Tyrosine 219 contributes to the shikimate binding site. Glycine 240 serves as a coordination point for NADP(+).

This sequence belongs to the shikimate dehydrogenase family. As to quaternary structure, homodimer.

The enzyme catalyses shikimate + NADP(+) = 3-dehydroshikimate + NADPH + H(+). The protein operates within metabolic intermediate biosynthesis; chorismate biosynthesis; chorismate from D-erythrose 4-phosphate and phosphoenolpyruvate: step 4/7. Functionally, involved in the biosynthesis of the chorismate, which leads to the biosynthesis of aromatic amino acids. Catalyzes the reversible NADPH linked reduction of 3-dehydroshikimate (DHSA) to yield shikimate (SA). The sequence is that of Shikimate dehydrogenase (NADP(+)) from Sphingopyxis alaskensis (strain DSM 13593 / LMG 18877 / RB2256) (Sphingomonas alaskensis).